The chain runs to 435 residues: UPF0597 protein AHA_4077 (435 aa).

This sequence belongs to the UPF0597 family.

This Aeromonas hydrophila subsp. hydrophila (strain ATCC 7966 / DSM 30187 / BCRC 13018 / CCUG 14551 / JCM 1027 / KCTC 2358 / NCIMB 9240 / NCTC 8049) protein is UPF0597 protein AHA_4077.